A 97-amino-acid polypeptide reads, in one-letter code: Protein transport protein SFT1 (97 aa).

Over 1–74 (MSNSRYSQTE…RLTRSLKAGN (74 aa)) the chain is Cytoplasmic. In terms of domain architecture, t-SNARE coiled-coil homology spans 7 to 69 (SQTESNNDRK…KNSSSRLTRS (63 aa)). A helical; Anchor for type IV membrane protein transmembrane segment spans residues 75–94 (SIWRMVGLALLIFFILYTLF). Residues 95 to 97 (KLF) lie on the Lumenal side of the membrane.

In terms of assembly, component of a SNARE complex consisting of SED5, GOS1, YKT6 and SFT1.

The protein localises to the golgi apparatus membrane. Functionally, vesicle SNARE required for retrograde transport within the Golgi complex. The polypeptide is Protein transport protein SFT1 (SFT1) (Saccharomyces cerevisiae (strain ATCC 204508 / S288c) (Baker's yeast)).